The sequence spans 350 residues: Protein RecA (350 aa).

80 to 87 (GPESSGKT) is an ATP binding site.

It belongs to the RecA family.

Its subcellular location is the cytoplasm. Functionally, can catalyze the hydrolysis of ATP in the presence of single-stranded DNA, the ATP-dependent uptake of single-stranded DNA by duplex DNA, and the ATP-dependent hybridization of homologous single-stranded DNAs. It interacts with LexA causing its activation and leading to its autocatalytic cleavage. The chain is Protein RecA from Chlorobium limicola (strain DSM 245 / NBRC 103803 / 6330).